A 137-amino-acid chain; its full sequence is ATP synthase epsilon chain, chloroplastic (137 aa).

It belongs to the ATPase epsilon chain family. In terms of assembly, F-type ATPases have 2 components, CF(1) - the catalytic core - and CF(0) - the membrane proton channel. CF(1) has five subunits: alpha(3), beta(3), gamma(1), delta(1), epsilon(1). CF(0) has three main subunits: a, b and c.

The protein resides in the plastid. Its subcellular location is the chloroplast thylakoid membrane. Produces ATP from ADP in the presence of a proton gradient across the membrane. In Pinus thunbergii (Japanese black pine), this protein is ATP synthase epsilon chain, chloroplastic.